The following is a 62-amino-acid chain: Small ribosomal subunit protein uS14 (62 aa).

Cys-25, Cys-28, Cys-41, and Cys-44 together coordinate Zn(2+).

The protein belongs to the universal ribosomal protein uS14 family. Zinc-binding uS14 subfamily. As to quaternary structure, part of the 30S ribosomal subunit. Contacts proteins S3 and S10. Requires Zn(2+) as cofactor.

Binds 16S rRNA, required for the assembly of 30S particles and may also be responsible for determining the conformation of the 16S rRNA at the A site. The chain is Small ribosomal subunit protein uS14 from Sulfurihydrogenibium sp. (strain YO3AOP1).